Reading from the N-terminus, the 262-residue chain is Putative BTB/POZ domain-containing protein L834 (262 aa).

One can recognise a BTB domain in the interval 16 to 86; it reads FDVVVELTDE…FYKKNIQPCI (71 aa).

The protein belongs to the mimivirus BTB/WD family.

The protein is Putative BTB/POZ domain-containing protein L834 of Acanthamoeba polyphaga (Amoeba).